The sequence spans 358 residues: Peptide chain release factor 1 (358 aa).

Glutamine 235 carries the post-translational modification N5-methylglutamine.

This sequence belongs to the prokaryotic/mitochondrial release factor family. Methylated by PrmC. Methylation increases the termination efficiency of RF1.

It is found in the cytoplasm. Functionally, peptide chain release factor 1 directs the termination of translation in response to the peptide chain termination codons UAG and UAA. The sequence is that of Peptide chain release factor 1 from Neisseria gonorrhoeae (strain ATCC 700825 / FA 1090).